The chain runs to 503 residues: MSKPFLSLLSLSLLLFASACLATSSEFDRLNQCQLDSINALEPDHRVESEAGLTETWNPNHPELKCAGVSLIRRTIDPNGLHLPSFSPSPQLIFIIQGKGVLGLSFPGCPETYEEPRSSQSRQESRQQQGDSHQKVRRFRKGDIIAIPSGIPYWTYNHGDEPLVAISLLDTSNIANQLDSTPRVFYLGGNPETEFPETQEEQQGRHRQKHSYPVGRRSGHHQQEEESEEQNEGNSVLSGFSSEFLAQTFNTEEDTAKRLRSPRDERSQIVRVEGGLRIIKPKGKEEEEKEQSHSHSHREEKEEEEEEEEDEEEKQRSEERKNGLEETICSAKIRENIADAARADLYNPRAGRISTANSLTLPVLRYLRLSAEYVRLYRNGIYAPHWNINANSLLYVIRGEGRVRIVNCQGNTVFDNKVRKGQLVVVPQNFVVAEQAGEEEGLEYVVFKTNDRAAVSHVQQVFRATPSEVLANAFGLRQRQVTELKLSGNRGPLVHPRSQSQSH.

Positions Met1–Ala22 are cleaved as a signal peptide. Cystine bridges form between Cys33–Cys66 and Cys109–Cys329. Residues Ile38–Lys257 enclose the Cupin type-1 1 domain. 3 disordered regions span residues Glu111–Arg140, Phe185–Ser235, and Glu253–Gly323. Low complexity predominate over residues Ser118–Gln129. Composition is skewed to basic and acidic residues over residues Asp254–Gln268 and Lys282–Glu300. The segment covering Lys301 to Glu312 has biased composition (acidic residues). Residues Glu313–Gly323 are compositionally biased toward basic and acidic residues. The 148-residue stretch at Glu335–Thr482 folds into the Cupin type-1 2 domain.

The protein belongs to the 11S seed storage protein (globulins) family. As to quaternary structure, hexamer; each subunit is composed of an acidic and a basic chain derived from a single precursor and linked by a disulfide bond.

Its function is as follows. This protein found in the seeds of many leguminous and non-leguminous plants is the source of sulfur-containing amino acids in seed meals. In Pisum sativum (Garden pea), this protein is Legumin J (LEGJ).